We begin with the raw amino-acid sequence, 184 residues long: Lysozyme 1 (184 aa).

The first 20 residues, 1 to 20, serve as a signal peptide directing secretion; sequence MNGLILFCAVVFATAVCTYG. Residues 69–184 form the I-type lysozyme domain; sequence TGMVSQQCLR…WRRVQAQGCN (116 aa). 6 disulfide bridges follow: Cys-76/Cys-152, Cys-81/Cys-87, Cys-92/Cys-101, Cys-114/Cys-134, Cys-124/Cys-130, and Cys-148/Cys-166. Residue Glu-84 is the Proton donor of the active site. The Nucleophile role is filled by Asp-95. Position 107-113 (107-113) interacts with substrate; it reads KRAYWID. Residues Tyr-138 and 159-161 each bind substrate; that span reads HNG.

In terms of tissue distribution, hemolymph, labial palps, non-vesiculated cells of mantle connective tissue, cells of interlamellar junctions and epithelia surrounding the water tubes of the gills.

The protein localises to the secreted. It carries out the reaction Hydrolysis of (1-&gt;4)-beta-linkages between N-acetylmuramic acid and N-acetyl-D-glucosamine residues in a peptidoglycan and between N-acetyl-D-glucosamine residues in chitodextrins.. In terms of biological role, has antibacterial activity against the Gram-positive bacteria L.garvieae, M.luteus and Enterococcus sp., and the Gram-negative bacteria E.coli and V.vulnificus. Weak antibacterial activity against the Gram-negative bacterium A.hydrophila. No antibacterial activity detected against the Gram-positive bacterium S.iniae or against the Gram-negative bacterium E.ictaluri. Shows some chitinase activity but no isopeptidase activity. The polypeptide is Lysozyme 1 (Crassostrea virginica (Eastern oyster)).